A 167-amino-acid polypeptide reads, in one-letter code: Small ribosomal subunit protein uS3m (167 aa).

The transit peptide at 1 to 35 (MAASVCSGLLGPRVLSWSRELPCAWRALHTSPVCA) directs the protein to the mitochondrion.

It belongs to the universal ribosomal protein uS3 family. In terms of assembly, component of the mitochondrial small ribosomal subunit (mt-SSU). Mature mammalian 55S mitochondrial ribosomes consist of a small (28S) and a large (39S) subunit. The 28S small subunit contains a 12S ribosomal RNA (12S mt-rRNA) and 30 different proteins. The 39S large subunit contains a 16S rRNA (16S mt-rRNA), a copy of mitochondrial valine transfer RNA (mt-tRNA(Val)), which plays an integral structural role, and 52 different proteins.

The protein resides in the mitochondrion. The sequence is that of Small ribosomal subunit protein uS3m (MRPS24) from Homo sapiens (Human).